The chain runs to 602 residues: MSKVFESKSLIEEAKSRKKQYETLEEQLNTLKKAFQGVADLGDNFKGNGADNIKDFFQGQAEIVDSWLTLVSAQIAFLNGISGDIKDQELNDSYVETSFLDHELPNGDLKASEIVSAHKEEIDSILSGISDIIDLDMYTLDDYADKMGDAQKIRRDTITAVDKLDESLTTEYQNLESLDNAVLTKYSVLMQATSNGKSASPMYYDKKAFHSNEVYKSVIEVENQGTTYIDAKTQQAEARRLQEKAEEEANKPWYEKTWDGVCNFTGEVTGYYDYKRATEGVDPVTGEKLSTAERVTAGAMAAAGFIPVVGWAGRAFKGGKAIYKTGKAAIAAEHALDAYKTGKSLDILKMTEMGAYGLVASNGFSEAVTGRDMFGNKVSEEKRKQGALEAITIIGGAGLAHYFDRLYQKNAPYVNKVSNESLISNIAKTTEEKQTRLQYLRNKHGVLSKEDLHHRINLRAEVLNELSRIKSSGLTKKQRGPAVAGVLDKKTGNYYFGINNIDGKPPKVLHPLIHDRIVNMPTELKEGYIKTSGAGSHAEVNALNEALLQRPDADLKDLMVYVVSARKINKKMPEGVPMPRCPHCEYITQNTNYIPEALKYGK.

An LXG domain is found at 1–235; that stretch reads MSKVFESKSL…TTYIDAKTQQ (235 aa). Coiled coils occupy residues 6-41 and 227-251; these read ESKS…VADL and TYID…EANK.

The protein in the N-terminal section; belongs to the LXG family. As to quaternary structure, probably interacts with cognate immunity protein YwqK but not with non-cognate immunity proteins. The interaction inhibits the toxic activity of YwqJ.

Its subcellular location is the secreted. Functionally, toxic component of one of 6 LXG toxin-immunity modules in this strain. They promote kin selection, mediate competition in biofilms, and drive spatial segregation of different strains, indicating that LXG toxins may help avoid warfare between strains in biofilms. Mediates intercellular competition during biofilm formation; disruption of the operon disadvantages the bacteria, but overexpression of the cognate immunity protein restores growth in competition with wild-type. Overexpression alone in situ causes growth arrest but not cell lysis; no effect is seen on DNA or rRNA. Co-overexpression with cognate immunity protein YwqK does not cause growth arrest. The toxic effect is dependent on the epsA and tapA operons which are required for biofilm formation. Its toxic effects are probably neutralized by its cognate immunity protein YwqK, but not by immunity proteins specific to other toxins with the LXG domain. May have deaminase activity. This chain is Toxin YwqJ (ywqJ), found in Bacillus subtilis (strain 168).